Consider the following 599-residue polypeptide: MLGMYVPDRFALKSSRVQDGMGLYTARRVRKGEKFGPFAGEKRMPEDLDENMDYRLMWEVRGSKGEVLYILDATNPRHSNWLRFVHEAPSQERKNLAAIQEGENIFYLAVDDIETDTELLIGYLDSDVEAEEEEQQALTMTKEGKVDHSKGQLAAGSKGHLGCEEDFACPQCESSFPSEEVLTEHLQSLHQKPTGEKEFKCENCGKKFPVRQALQRHFEQHRKACRGEARFVCKADSCGKRLKSKDALRRHQENVHTGDPKRKLICSVCNRKCTSVSSLQEHRKIHEIFDCQECMKKFISANQLKRHMITHSEKRPYNCEICNKSFKRLDQVGAHKVIHSEDKPYQCKLCGKGFAHRNVYKNHKKTHSEERPFQCDACKALFRTPFSLQRHLLIHNSERTFKCHHCDATFKRKDTLNVHVQVVHERHKKYRCELCNKAFVTPSVLRSHKKTHTGEKEKVCPYCGQKFASSGTLRVHIRSHTGERPYQCPYCEKGFSKNDGLKMHIRTHTREKPYQCSECSKAFSQKRGLDEHKRTHTGEKPFQCDVCDLAFSLKKMLIRHKMTHNPNRPMAECHFCHKKFTRNDYLKVHMDNIHGVADS.

The 117-residue stretch at 8 to 124 folds into the SET domain; sequence DRFALKSSRV…TDTELLIGYL (117 aa). 12 consecutive C2H2-type zinc fingers follow at residues 167–190, 199–221, 231–256, 264–286, 289–311, 317–339, 345–367, 373–395, 401–424, 430–452, 458–480, and 486–508; these read FACP…QSLH, FKCE…FEQH, FVCK…ENVH, LICS…RKIH, FDCQ…MITH, YNCE…KVIH, YQCK…KKTH, FQCD…LLIH, FKCH…QVVH, YRCE…KKTH, KVCP…IRSH, and YQCP…IRTH. Residues 514–536 form a C2H2-type 13; degenerate zinc finger; the sequence is YQCSECSKAFSQKRGLDEHKRTH. 2 consecutive C2H2-type zinc fingers follow at residues 542 to 564 and 571 to 594; these read FQCD…KMTH and AECH…DNIH.

Belongs to the class V-like SAM-binding methyltransferase superfamily. Interacts with EHMT2/G9A, GFI1 and HDAC1.

The protein resides in the nucleus. Functionally, sequence-specific DNA-binding transcription factor. Represses transcription at least in part by recruitment of the histone methyltransferase EHMT2/G9A and histone deacetylases such as HDAC1. Regulates hematopoiesis-associated protein-coding and microRNA (miRNA) genes. May regulate the expression of proteins involved in extracellular matrix development and maintenance, connective tissue components and molecules regulating cell migration and adhesion. May cause G2/M arrest and apoptosis in cancer cells. The sequence is that of PR domain zinc finger protein 5 (Prdm5) from Mus musculus (Mouse).